We begin with the raw amino-acid sequence, 188 residues long: Elongation factor P (188 aa).

The protein belongs to the elongation factor P family.

The protein localises to the cytoplasm. Its pathway is protein biosynthesis; polypeptide chain elongation. Involved in peptide bond synthesis. Stimulates efficient translation and peptide-bond synthesis on native or reconstituted 70S ribosomes in vitro. Probably functions indirectly by altering the affinity of the ribosome for aminoacyl-tRNA, thus increasing their reactivity as acceptors for peptidyl transferase. The protein is Elongation factor P of Leptospira biflexa serovar Patoc (strain Patoc 1 / Ames).